Reading from the N-terminus, the 513-residue chain is Xylose import ATP-binding protein XylG (513 aa).

2 consecutive ABC transporter domains span residues 5 to 242 (LEMK…VGRE) and 259 to 505 (LRVE…LRSE). 37-44 (GENGSGKS) provides a ligand contact to ATP.

This sequence belongs to the ABC transporter superfamily. Xylose importer (TC 3.A.1.2.4) family. As to quaternary structure, the complex is composed of two ATP-binding proteins (XylG), two transmembrane proteins (XylH) and a solute-binding protein (XylF).

The protein localises to the cell inner membrane. The catalysed reaction is D-xylose(out) + ATP + H2O = D-xylose(in) + ADP + phosphate + H(+). Functionally, part of the ABC transporter complex XylFGH involved in xylose import. Responsible for energy coupling to the transport system. The sequence is that of Xylose import ATP-binding protein XylG from Pectobacterium atrosepticum (strain SCRI 1043 / ATCC BAA-672) (Erwinia carotovora subsp. atroseptica).